Reading from the N-terminus, the 130-residue chain is Large ribosomal subunit protein bL17 (130 aa).

It belongs to the bacterial ribosomal protein bL17 family. In terms of assembly, part of the 50S ribosomal subunit. Contacts protein L32.

The polypeptide is Large ribosomal subunit protein bL17 (Shewanella pealeana (strain ATCC 700345 / ANG-SQ1)).